Consider the following 485-residue polypeptide: Malonate-semialdehyde dehydrogenase (485 aa).

NAD(+) contacts are provided by Phe155, Lys179, Glu182, Arg183, and Ser232. Catalysis depends on Cys287, which acts as the Nucleophile. An NAD(+)-binding site is contributed by Glu386.

The protein belongs to the aldehyde dehydrogenase family. IolA subfamily. Homotetramer.

It catalyses the reaction 3-oxopropanoate + NAD(+) + CoA + H2O = hydrogencarbonate + acetyl-CoA + NADH + H(+). It carries out the reaction 2-methyl-3-oxopropanoate + NAD(+) + CoA + H2O = propanoyl-CoA + hydrogencarbonate + NADH + H(+). The protein operates within polyol metabolism; myo-inositol degradation into acetyl-CoA; acetyl-CoA from myo-inositol: step 7/7. Catalyzes the oxidation of malonate semialdehyde (MSA) and methylmalonate semialdehyde (MMSA) into acetyl-CoA and propanoyl-CoA, respectively. Is involved in a myo-inositol catabolic pathway. Bicarbonate, and not CO2, is the end-product of the enzymatic reaction. This is Malonate-semialdehyde dehydrogenase from Halalkalibacterium halodurans (strain ATCC BAA-125 / DSM 18197 / FERM 7344 / JCM 9153 / C-125) (Bacillus halodurans).